The following is a 66-amino-acid chain: MPRIIVDPKKPFDISLRNFKRACEKAGIKQELRDRQHYVKPTQKRKIAKKAAISKAKKEARRSYSY.

Positions 38–66 (YVKPTQKRKIAKKAAISKAKKEARRSYSY) are disordered.

The protein belongs to the bacterial ribosomal protein bS21 family.

The chain is Small ribosomal subunit protein bS21B from Francisella tularensis subsp. tularensis (strain SCHU S4 / Schu 4).